The chain runs to 323 residues: Beta-ketoacyl-[acyl-carrier-protein] synthase III (323 aa).

Residues Cys-114 and His-250 contribute to the active site. The ACP-binding stretch occupies residues Gln-251–Arg-255. Asn-280 is an active-site residue.

This sequence belongs to the thiolase-like superfamily. FabH family. In terms of assembly, homodimer.

It localises to the cytoplasm. It catalyses the reaction malonyl-[ACP] + acetyl-CoA + H(+) = 3-oxobutanoyl-[ACP] + CO2 + CoA. Its pathway is lipid metabolism; fatty acid biosynthesis. Catalyzes the condensation reaction of fatty acid synthesis by the addition to an acyl acceptor of two carbons from malonyl-ACP. Catalyzes the first condensation reaction which initiates fatty acid synthesis and may therefore play a role in governing the total rate of fatty acid production. Possesses both acetoacetyl-ACP synthase and acetyl transacylase activities. Its substrate specificity determines the biosynthesis of branched-chain and/or straight-chain of fatty acids. The sequence is that of Beta-ketoacyl-[acyl-carrier-protein] synthase III from Rhodospirillum centenum (strain ATCC 51521 / SW).